A 120-amino-acid chain; its full sequence is Large ribosomal subunit protein bL20 (120 aa).

It belongs to the bacterial ribosomal protein bL20 family.

Its function is as follows. Binds directly to 23S ribosomal RNA and is necessary for the in vitro assembly process of the 50S ribosomal subunit. It is not involved in the protein synthesizing functions of that subunit. In Desulforudis audaxviator (strain MP104C), this protein is Large ribosomal subunit protein bL20.